Here is a 452-residue protein sequence, read N- to C-terminus: Cell division protein FtsZ (452 aa).

Residues Gly24–Asn28, Gly111–Gly113, Glu142, Arg146, and Asp190 each bind GTP.

The protein belongs to the FtsZ family. In terms of assembly, homodimer. Polymerizes to form a dynamic ring structure in a strictly GTP-dependent manner. Interacts directly with several other division proteins.

The protein resides in the cytoplasm. Essential cell division protein that forms a contractile ring structure (Z ring) at the future cell division site. The regulation of the ring assembly controls the timing and the location of cell division. One of the functions of the FtsZ ring is to recruit other cell division proteins to the septum to produce a new cell wall between the dividing cells. Binds GTP and shows GTPase activity. The sequence is that of Cell division protein FtsZ from Rickettsia typhi (strain ATCC VR-144 / Wilmington).